Here is a 444-residue protein sequence, read N- to C-terminus: UDP-N-acetylmuramate--L-alanine ligase (444 aa).

110-116 (GAHGKTS) lines the ATP pocket.

The protein belongs to the MurCDEF family.

It localises to the cytoplasm. It catalyses the reaction UDP-N-acetyl-alpha-D-muramate + L-alanine + ATP = UDP-N-acetyl-alpha-D-muramoyl-L-alanine + ADP + phosphate + H(+). It functions in the pathway cell wall biogenesis; peptidoglycan biosynthesis. Functionally, cell wall formation. This Streptococcus pneumoniae (strain P1031) protein is UDP-N-acetylmuramate--L-alanine ligase.